Consider the following 209-residue polypeptide: Uridine kinase (209 aa).

16 to 23 contacts ATP; it reads GGSGSGKT.

It belongs to the uridine kinase family.

The protein localises to the cytoplasm. The catalysed reaction is uridine + ATP = UMP + ADP + H(+). It carries out the reaction cytidine + ATP = CMP + ADP + H(+). It functions in the pathway pyrimidine metabolism; CTP biosynthesis via salvage pathway; CTP from cytidine: step 1/3. It participates in pyrimidine metabolism; UMP biosynthesis via salvage pathway; UMP from uridine: step 1/1. The chain is Uridine kinase from Lactiplantibacillus plantarum (strain ATCC BAA-793 / NCIMB 8826 / WCFS1) (Lactobacillus plantarum).